Here is a 428-residue protein sequence, read N- to C-terminus: Glial fibrillary acidic protein (428 aa).

Residues 1–68 (MERRRVTSAT…KETRASERAE (68 aa)) are head. Phosphothreonine; by AURKB and ROCK1 is present on Thr7. Position 12 is an omega-N-methylarginine (Arg12). Phosphoserine; by AURKB and ROCK1 is present on Ser13. 2 positions are modified to citrulline: Arg26 and Arg32. Ser34 is subject to Phosphoserine; by AURKB and ROCK1. One can recognise an IF rod domain in the interval 65-373 (ERAEMMELND…KLLEGEENRI (309 aa)). Residues 69-100 (MMELNDRFASYIEKVRFLEQQNKALAAELNQL) form a coil 1A region. Phosphoserine is present on Ser78. The tract at residues 101 to 111 (RAKEPTKLADV) is linker 1. A phosphothreonine mark is found at Thr106 and Thr146. Residues 112–210 (YQAELRELRL…EEEVRELQEQ (99 aa)) form a coil 1B region. A linker 12 region spans residues 211–226 (LAQQQVHVEMDVAKPD). The coil 2A stretch occupies residues 227-248 (LTAALREIRTQYEAVASSNMHE). Residues 249–252 (AEEW) form a linker 2 region. The tract at residues 253-373 (YRSKFADLND…KLLEGEENRI (121 aa)) is coil 2B. Residue Arg266 is modified to Citrulline. Position 319 is a phosphoserine (Ser319). The interval 374 to 428 (TIPVQTFSNLQIRETSLDTKSVSEGHLKRNIVVKTVEMRDGEVIKESKQEHKDVM) is tail. Phosphothreonine is present on Thr379. Phosphoserine is present on Ser381. Residues Arg402 and Arg412 each carry the citrulline modification.

This sequence belongs to the intermediate filament family. Interacts with SYNM. In terms of processing, phosphorylated by PKN1.

It is found in the cytoplasm. GFAP, a class-III intermediate filament, is a cell-specific marker that, during the development of the central nervous system, distinguishes astrocytes from other glial cells. The sequence is that of Glial fibrillary acidic protein (GFAP) from Bos taurus (Bovine).